Consider the following 214-residue polypeptide: uncharacterized protein (214 aa).

The next 2 membrane-spanning stretches (helical) occupy residues 19–39 (IAIF…SYIL) and 50–70 (LALF…LLIG).

The protein localises to the cell membrane. This is an uncharacterized protein from Methanocaldococcus jannaschii (strain ATCC 43067 / DSM 2661 / JAL-1 / JCM 10045 / NBRC 100440) (Methanococcus jannaschii).